The following is a 595-amino-acid chain: Acriflavine sensitivity control protein acr-2 (595 aa).

The zn(2)-C6 fungal-type DNA-binding region spans 22 to 49; it reads CYNCHRKRLRCDKSLPACLKCSINGEEC. Over residues 69-88 the composition is skewed to low complexity; sequence TTRTTNKTNFNGTNTTTPRT. Residues 69–172 form a disordered region; the sequence is TTRTTNKTNF…PDDNPDPSSQ (104 aa). Residues 89–117 show a composition bias toward polar residues; that stretch reads VKSSTPTQAPTPSDSPRQLDTDVTSSSAP. Over residues 118–138 the composition is skewed to low complexity; that stretch reads SHTCSRSTTTSTTTTRISSPT.

The protein localises to the nucleus. Its function is as follows. Probable transcriptional regulator. The chain is Acriflavine sensitivity control protein acr-2 (acr-2) from Neurospora crassa (strain ATCC 24698 / 74-OR23-1A / CBS 708.71 / DSM 1257 / FGSC 987).